The sequence spans 242 residues: Proteasome subunit alpha (242 aa).

It belongs to the peptidase T1A family. The 20S proteasome core is composed of 14 alpha and 14 beta subunits that assemble into four stacked heptameric rings, resulting in a barrel-shaped structure. The two inner rings, each composed of seven catalytic beta subunits, are sandwiched by two outer rings, each composed of seven alpha subunits. The catalytic chamber with the active sites is on the inside of the barrel. Has a gated structure, the ends of the cylinder being occluded by the N-termini of the alpha-subunits. Is capped by the proteasome-associated ATPase, ARC.

Its subcellular location is the cytoplasm. Its pathway is protein degradation; proteasomal Pup-dependent pathway. Its activity is regulated as follows. The formation of the proteasomal ATPase ARC-20S proteasome complex, likely via the docking of the C-termini of ARC into the intersubunit pockets in the alpha-rings, may trigger opening of the gate for substrate entry. Interconversion between the open-gate and close-gate conformations leads to a dynamic regulation of the 20S proteasome proteolysis activity. Component of the proteasome core, a large protease complex with broad specificity involved in protein degradation. The sequence is that of Proteasome subunit alpha from Renibacterium salmoninarum (strain ATCC 33209 / DSM 20767 / JCM 11484 / NBRC 15589 / NCIMB 2235).